The sequence spans 384 residues: DNA replication and repair protein RecF (384 aa).

Residue 43–50 (GENGSGKT) participates in ATP binding.

The protein belongs to the RecF family.

It is found in the cytoplasm. Its function is as follows. The RecF protein is involved in DNA metabolism; it is required for DNA replication and normal SOS inducibility. RecF binds preferentially to single-stranded, linear DNA. It also seems to bind ATP. This Brucella suis biovar 1 (strain 1330) protein is DNA replication and repair protein RecF.